The chain runs to 426 residues: Bile acid CoA-transferase BaiF (426 aa).

The active-site Nucleophile is Asp168.

It belongs to the CoA-transferase III family.

The enzyme catalyses lithocholoyl-CoA + cholate = choloyl-CoA + lithocholate. The catalysed reaction is deoxycholoyl-CoA + cholate = choloyl-CoA + deoxycholate. It carries out the reaction allodeoxycholoyl-CoA + cholate = allodeoxycholate + choloyl-CoA. It catalyses the reaction allocholate + deoxycholoyl-CoA = allocholoyl-CoA + deoxycholate. The enzyme catalyses allocholate + lithocholoyl-CoA = allocholoyl-CoA + lithocholate. The catalysed reaction is allocholate + allodeoxycholoyl-CoA = allocholoyl-CoA + allodeoxycholate. It carries out the reaction lithocholoyl-CoA + chenodeoxycholate = chenodeoxycholoyl-CoA + lithocholate. It catalyses the reaction ursodeoxycholate + deoxycholoyl-CoA = ursodeoxycholoyl-CoA + deoxycholate. The enzyme catalyses ursodeoxycholate + lithocholoyl-CoA = ursodeoxycholoyl-CoA + lithocholate. The catalysed reaction is allodeoxycholoyl-CoA + ursodeoxycholate = ursodeoxycholoyl-CoA + allodeoxycholate. It carries out the reaction beta-muricholate + lithocholoyl-CoA = beta-muricholoyl-CoA + lithocholate. It catalyses the reaction beta-muricholate + deoxycholoyl-CoA = beta-muricholoyl-CoA + deoxycholate. The enzyme catalyses beta-muricholate + allodeoxycholoyl-CoA = beta-muricholoyl-CoA + allodeoxycholate. The catalysed reaction is choloyl-CoA + H2O = cholate + CoA + H(+). It carries out the reaction chenodeoxycholoyl-CoA + H2O = chenodeoxycholate + CoA + H(+). Its pathway is lipid metabolism; bile acid biosynthesis. Functions in the bile acid 7alpha-dehydroxylation pathway, which forms secondary bile acids via the 7alpha-dehydroxylation of primary bile acids, and is carried out by intestinal anaerobic bacteria. Acts as a bile acid CoA transferase with broad bile acid substrate specificity. Catalyzes the transfer of the CoA moiety of secondary bile acid-CoA compounds to primary bile acids. Can use lithocholoyl-CoA, deoxycholoyl-CoA and allodeoxycholoyl-CoA as bile acid CoA donors and cholate, allocholate, chenodeoxycholate, ursodeoxycholate, and beta-muricholate as bile acid CoA acceptors. Also displays CoA hydrolase activity, being able to catalyze the hydrolysis of choloyl-CoA, 3-dehydrocholoyl-CoA, and chenodeoxycholoyl-CoA, releasing CoA and the corresponding free bile acid. However, this latter activity may not represent the actual activity of this enzyme, since using a transferase rather than hydrolase, the bacteria conserve the thioester bond energy, saving ATP molecules. Shows no hydrolytic activity with acetyl-CoA, isovaleryl-CoA, palmitoyl-CoA, or phenylacetyl-CoA as substrates. This is Bile acid CoA-transferase BaiF from Clostridium scindens (strain JCM 10418 / VPI 12708).